We begin with the raw amino-acid sequence, 303 residues long: Protease HtpX homolog (303 aa).

Helical transmembrane passes span 19 to 39 (IIIF…VSYF) and 41 to 61 (LGEF…YYAY). Zn(2+) is bound at residue H146. E147 is an active-site residue. H150 contacts Zn(2+). Transmembrane regions (helical) follow at residues 156 to 176 (VRLQ…GDSL) and 192 to 212 (NILG…ATLL). E221 lines the Zn(2+) pocket.

It belongs to the peptidase M48B family. The cofactor is Zn(2+).

The protein localises to the cell inner membrane. In Dictyoglomus thermophilum (strain ATCC 35947 / DSM 3960 / H-6-12), this protein is Protease HtpX homolog.